The chain runs to 644 residues: Exoribonuclease 2 (644 aa).

The RNB domain maps to Arg189 to Lys516. The region spanning Asp561–Val643 is the S1 motif domain.

It belongs to the RNR ribonuclease family. RNase II subfamily.

It is found in the cytoplasm. It carries out the reaction Exonucleolytic cleavage in the 3'- to 5'-direction to yield nucleoside 5'-phosphates.. Functionally, involved in mRNA degradation. Hydrolyzes single-stranded polyribonucleotides processively in the 3' to 5' direction. This Escherichia coli O45:K1 (strain S88 / ExPEC) protein is Exoribonuclease 2.